The primary structure comprises 244 residues: Methylthioribulose-1-phosphate dehydratase (244 aa).

Position 89 (Cys89) interacts with substrate. His107 and His109 together coordinate Zn(2+). Glu130 acts as the Proton donor/acceptor in catalysis. His192 provides a ligand contact to Zn(2+).

The protein belongs to the aldolase class II family. MtnB subfamily. Requires Zn(2+) as cofactor.

It is found in the cytoplasm. It catalyses the reaction 5-(methylsulfanyl)-D-ribulose 1-phosphate = 5-methylsulfanyl-2,3-dioxopentyl phosphate + H2O. The protein operates within amino-acid biosynthesis; L-methionine biosynthesis via salvage pathway; L-methionine from S-methyl-5-thio-alpha-D-ribose 1-phosphate: step 2/6. Its function is as follows. Catalyzes the dehydration of methylthioribulose-1-phosphate (MTRu-1-P) into 2,3-diketo-5-methylthiopentyl-1-phosphate (DK-MTP-1-P). This is Methylthioribulose-1-phosphate dehydratase from Saccharomyces cerevisiae (strain YJM789) (Baker's yeast).